Here is a 453-residue protein sequence, read N- to C-terminus: L-cysteine:1D-myo-inositol 2-amino-2-deoxy-alpha-D-glucopyranoside ligase (453 aa).

Residue Cys-58 participates in Zn(2+) binding. Residues 58-61 (CGIT), Thr-73, and 96-98 (NVT) each bind L-cysteinyl-5'-AMP. The 'HIGH' region signature appears at 60–70 (ITPYDATHMGH). The 'ERGGDP' region signature appears at 221–226 (ERGGDP). L-cysteinyl-5'-AMP is bound at residue Trp-262. A Zn(2+)-binding site is contributed by Cys-266. 284 to 286 (GND) contacts L-cysteinyl-5'-AMP. Residue His-291 coordinates Zn(2+). Val-317 is a binding site for L-cysteinyl-5'-AMP. The 'KMSKS' region motif lies at 323–327 (KMSKS).

The protein belongs to the class-I aminoacyl-tRNA synthetase family. MshC subfamily. In terms of assembly, monomer. Requires Zn(2+) as cofactor.

The enzyme catalyses 1D-myo-inositol 2-amino-2-deoxy-alpha-D-glucopyranoside + L-cysteine + ATP = 1D-myo-inositol 2-(L-cysteinylamino)-2-deoxy-alpha-D-glucopyranoside + AMP + diphosphate + H(+). Catalyzes the ATP-dependent condensation of GlcN-Ins and L-cysteine to form L-Cys-GlcN-Ins. This chain is L-cysteine:1D-myo-inositol 2-amino-2-deoxy-alpha-D-glucopyranoside ligase, found in Rothia mucilaginosa (strain DY-18) (Stomatococcus mucilaginosus).